Reading from the N-terminus, the 507-residue chain is Glycerol kinase (507 aa).

Threonine 14 is an ADP binding site. Residues threonine 14, threonine 15, and serine 16 each contribute to the ATP site. Position 14 (threonine 14) interacts with sn-glycerol 3-phosphate. Arginine 18 provides a ligand contact to ADP. Residues arginine 84, glutamate 85, tyrosine 136, and aspartate 246 each coordinate sn-glycerol 3-phosphate. Glycerol contacts are provided by arginine 84, glutamate 85, tyrosine 136, aspartate 246, and glutamine 247. ADP-binding residues include threonine 268 and glycine 311. Residues threonine 268, glycine 311, glutamine 315, and glycine 412 each coordinate ATP. Glycine 412 and asparagine 416 together coordinate ADP.

It belongs to the FGGY kinase family.

It carries out the reaction glycerol + ATP = sn-glycerol 3-phosphate + ADP + H(+). It participates in polyol metabolism; glycerol degradation via glycerol kinase pathway; sn-glycerol 3-phosphate from glycerol: step 1/1. Inhibited by fructose 1,6-bisphosphate (FBP). In terms of biological role, key enzyme in the regulation of glycerol uptake and metabolism. Catalyzes the phosphorylation of glycerol to yield sn-glycerol 3-phosphate. The polypeptide is Glycerol kinase (Vibrio atlanticus (strain LGP32) (Vibrio splendidus (strain Mel32))).